The following is a 379-amino-acid chain: Cell division protein FtsZ (379 aa).

GTP-binding positions include 18–22 (GGGVN), 105–107 (GTG), Glu-136, Arg-140, and Asp-184.

The protein belongs to the FtsZ family. As to quaternary structure, homodimer. Polymerizes to form a dynamic ring structure in a strictly GTP-dependent manner. Interacts directly with several other division proteins.

It localises to the cytoplasm. Functionally, essential cell division protein that forms a contractile ring structure (Z ring) at the future cell division site. The regulation of the ring assembly controls the timing and the location of cell division. One of the functions of the FtsZ ring is to recruit other cell division proteins to the septum to produce a new cell wall between the dividing cells. Binds GTP and shows GTPase activity. The sequence is that of Cell division protein FtsZ from Mycobacterium bovis (strain ATCC BAA-935 / AF2122/97).